We begin with the raw amino-acid sequence, 738 residues long: DNA repair and recombination protein RAD54-like (738 aa).

The disordered stretch occupies residues 1 to 31 (MRRSLAPSQVAKRKQGPDSDDEEDWEPDMEP). Acidic residues predominate over residues 18–29 (DSDDEEDWEPDM). The 176-residue stretch at 164-339 (GRRIENSYGC…FSLVHFVNSG (176 aa)) folds into the Helicase ATP-binding domain. 177–184 (DEMGLGKT) is a binding site for ATP. Residues 290 to 293 (DEGH) carry the DEAH box motif. Residues 493–647 (LVLDYILAMT…CVVDEEQDVE (155 aa)) enclose the Helicase C-terminal domain. Ser566 and Ser567 each carry phosphoserine.

In terms of assembly, homohexamer. Interacts with RAD51. Phosphorylated. Phosphorylations at Ser-566 and Ser-567 allow efficient removal of RAD51 filaments from DNA.

The catalysed reaction is ATP + H2O = ADP + phosphate + H(+). Its function is as follows. Plays an essential role in homologous recombination (HR) which is a major pathway for repairing DNA double-strand breaks (DSBs), single-stranded DNA (ssDNA) gaps, and stalled or collapsed replication forks. Acts as a molecular motor during the homology search and guides RAD51 ssDNA along a donor dsDNA thereby changing the homology search from the diffusion-based mechanism to a motor-guided mechanism. Also plays an essential role in RAD51-mediated synaptic complex formation which consists of three strands encased in a protein filament formed once homology is recognized. Once DNA strand exchange occured, dissociates RAD51 from nucleoprotein filaments formed on dsDNA. This Danio rerio (Zebrafish) protein is DNA repair and recombination protein RAD54-like (rad54l).